Here is a 204-residue protein sequence, read N- to C-terminus: dITP/XTP pyrophosphatase (204 aa).

Substrate is bound at residue 8 to 13 (SRNRKK). Asp-73 (proton acceptor) is an active-site residue. Asp-73 serves as a coordination point for Mg(2+). Substrate-binding positions include Ser-74, 155 to 158 (FGYD), Lys-179, and 184 to 185 (HR).

The protein belongs to the HAM1 NTPase family. Homodimer. Mg(2+) is required as a cofactor.

It catalyses the reaction XTP + H2O = XMP + diphosphate + H(+). The catalysed reaction is dITP + H2O = dIMP + diphosphate + H(+). The enzyme catalyses ITP + H2O = IMP + diphosphate + H(+). Its function is as follows. Pyrophosphatase that catalyzes the hydrolysis of nucleoside triphosphates to their monophosphate derivatives, with a high preference for the non-canonical purine nucleotides XTP (xanthosine triphosphate), dITP (deoxyinosine triphosphate) and ITP. Seems to function as a house-cleaning enzyme that removes non-canonical purine nucleotides from the nucleotide pool, thus preventing their incorporation into DNA/RNA and avoiding chromosomal lesions. The protein is dITP/XTP pyrophosphatase of Mycolicibacterium paratuberculosis (strain ATCC BAA-968 / K-10) (Mycobacterium paratuberculosis).